Reading from the N-terminus, the 447-residue chain is Glutamine synthetase (447 aa).

Residues 20 to 105 form the GS beta-grasp domain; sequence RDVKFIRTQF…ILGDVYLPDG (86 aa). The GS catalytic domain maps to 112–447; the sequence is PRYVLKTAIK…WELSRYLSML (336 aa). Residues glutamate 135 and glutamate 137 each coordinate Mg(2+). Position 187 (glutamate 187) interacts with ATP. Residues glutamate 192 and glutamate 199 each contribute to the Mg(2+) site. Residues 243 to 244 and glycine 244 each bind L-glutamate; that span reads NG. Histidine 248 contributes to the Mg(2+) binding site. Serine 252 is an ATP binding site. Residues arginine 301, glutamate 307, and arginine 319 each contribute to the L-glutamate site. Residues arginine 319 and arginine 324 each contribute to the ATP site. Glutamate 336 provides a ligand contact to Mg(2+). Arginine 338 lines the L-glutamate pocket.

Belongs to the glutamine synthetase family. As to quaternary structure, homohexamer. Interacts and forms stable complexes with the regulatory protein GlnK1. It depends on Mg(2+) as a cofactor.

It localises to the cytoplasm. It carries out the reaction L-glutamate + NH4(+) + ATP = L-glutamine + ADP + phosphate + H(+). Directly stimulated by the effector molecule 2-oxoglutarate. Inhibited by GlnK1. 2-oxoglutarate antagonizes the inhibitory effects of GlnK1, but does not prevent GlnK1/GlnA1 complex formation. Probably involved in nitrogen metabolism via ammonium assimilation. Catalyzes the ATP-dependent biosynthesis of glutamine from glutamate and ammonia. The sequence is that of Glutamine synthetase from Methanosarcina mazei (strain ATCC BAA-159 / DSM 3647 / Goe1 / Go1 / JCM 11833 / OCM 88) (Methanosarcina frisia).